The following is a 302-amino-acid chain: Succinate--CoA ligase [ADP-forming] subunit alpha (302 aa).

Residues 17 to 20, lysine 43, and 96 to 98 contribute to the CoA site; these read TGST and ITE. Position 159 (tyrosine 159) interacts with substrate. Histidine 247 acts as the Tele-phosphohistidine intermediate in catalysis.

This sequence belongs to the succinate/malate CoA ligase alpha subunit family. As to quaternary structure, heterotetramer of two alpha and two beta subunits.

The enzyme catalyses succinate + ATP + CoA = succinyl-CoA + ADP + phosphate. It carries out the reaction GTP + succinate + CoA = succinyl-CoA + GDP + phosphate. The protein operates within carbohydrate metabolism; tricarboxylic acid cycle; succinate from succinyl-CoA (ligase route): step 1/1. Its function is as follows. Succinyl-CoA synthetase functions in the citric acid cycle (TCA), coupling the hydrolysis of succinyl-CoA to the synthesis of either ATP or GTP and thus represents the only step of substrate-level phosphorylation in the TCA. The alpha subunit of the enzyme binds the substrates coenzyme A and phosphate, while succinate binding and nucleotide specificity is provided by the beta subunit. This is Succinate--CoA ligase [ADP-forming] subunit alpha from Staphylococcus aureus (strain MRSA252).